The chain runs to 474 residues: tRNA-2-methylthio-N(6)-dimethylallyladenosine synthase (474 aa).

Positions 3–120 (KKLLIKTWGC…LPEMIKQSQS (118 aa)) constitute an MTTase N-terminal domain. Residues Cys-12, Cys-49, Cys-83, Cys-157, Cys-161, and Cys-164 each contribute to the [4Fe-4S] cluster site. In terms of domain architecture, Radical SAM core spans 143–375 (RAEGATAFVS…QQQINAQAMR (233 aa)). In terms of domain architecture, TRAM spans 378 to 441 (RLMLGTEQRV…ANSLRGEIVR (64 aa)).

This sequence belongs to the methylthiotransferase family. MiaB subfamily. As to quaternary structure, monomer. The cofactor is [4Fe-4S] cluster.

It localises to the cytoplasm. It carries out the reaction N(6)-dimethylallyladenosine(37) in tRNA + (sulfur carrier)-SH + AH2 + 2 S-adenosyl-L-methionine = 2-methylsulfanyl-N(6)-dimethylallyladenosine(37) in tRNA + (sulfur carrier)-H + 5'-deoxyadenosine + L-methionine + A + S-adenosyl-L-homocysteine + 2 H(+). Catalyzes the methylthiolation of N6-(dimethylallyl)adenosine (i(6)A), leading to the formation of 2-methylthio-N6-(dimethylallyl)adenosine (ms(2)i(6)A) at position 37 in tRNAs that read codons beginning with uridine. The chain is tRNA-2-methylthio-N(6)-dimethylallyladenosine synthase from Vibrio vulnificus (strain CMCP6).